Here is a 189-residue protein sequence, read N- to C-terminus: CASP-like protein 1F2 (189 aa).

The Cytoplasmic portion of the chain corresponds to 1–27 (MESLEVANGKSSALGVSREASSPPQMG). Residues 28 to 48 (FFIAQVVLRFFTLAFTGAAIA) traverse the membrane as a helical segment. Topologically, residues 49-77 (VMVTAKETVEVFSISFTVRYSYLSAFKFL) are extracellular. Residues 78–98 (VGADAVVCGFSMLSLIFVSIF) traverse the membrane as a helical segment. The Cytoplasmic portion of the chain corresponds to 99-113 (NKGKSNHYFFLYFHD). A helical membrane pass occupies residues 114-134 (LILMVLSMSACAAATAVGYVG). Residues 135 to 156 (RYGQDKAAWMAVCGNVKMFCDK) are Extracellular-facing. A helical membrane pass occupies residues 157 to 177 (ALASILLSLIGFICLFLLTIM). Residues 178–189 (AARNLRVSGHLI) lie on the Cytoplasmic side of the membrane.

Belongs to the Casparian strip membrane proteins (CASP) family. Homodimer and heterodimers.

Its subcellular location is the cell membrane. In Vitis vinifera (Grape), this protein is CASP-like protein 1F2.